Here is a 445-residue protein sequence, read N- to C-terminus: Type II methyltransferase M.Bpa9945I (445 aa).

The region spanning 1 to 444 (MIVIDLFSGA…RAVKDVINGH (444 aa)) is the SAM-dependent MTase C5-type domain. Cysteine 136 is a catalytic residue.

This sequence belongs to the class I-like SAM-binding methyltransferase superfamily. C5-methyltransferase family.

It is found in the cytoplasm. The catalysed reaction is a 2'-deoxycytidine in DNA + S-adenosyl-L-methionine = a 5-methyl-2'-deoxycytidine in DNA + S-adenosyl-L-homocysteine + H(+). In terms of biological role, component of antiviral defense system DISARM (defense island system associated with restriction-modification), composed of DrmE, DrmA, DrmB, DrmC and DrmMII. DISARM is probably a multi-gene restriction module, this subunit is a DNA methylase. Expression of DISARM in B.subtilis (strain BEST7003) confers resistance to phages Nf, phi29, phi105, phi3T, SPO1, SPR and SPP1. Protection is over 10(7)-fold against phi3T, 10(4)-10(5)-fold against Nf, phi29, phi105 and SPR, 100-fold against SPO1 and 10-fold against SPP1. DISARM does not interfere with phage adsorption, but instead interferes with (phi3T) DNA replication early in its cycle, preventing replication, circularization and lysogeny and probably causes phage DNA degradation (DNA is degraded in SPP1-infected cells). Expression of this methylase alone leads to highly methylated phage, however they are still susceptible to the DISARM system. A methylase, recognizes the double-stranded sequence 5'-CCWGG-3', methylates C-2 on both strands. Phage Nf does not have any 5'-CCWGG-3' motifs but is still targeted by the DISARM system. The sequence is that of Type II methyltransferase M.Bpa9945I from Bacillus paralicheniformis (strain ATCC 9945a / NCIMB 11709 / CD-2).